The chain runs to 193 residues: Protein hunchback (193 aa).

2 disordered regions span residues 16–126 (SHHH…ATTT) and 146–193 (SNDK…KYMA). Residues 17-31 (HHHHHHHAHHSHHQH) are compositionally biased toward basic residues. Composition is skewed to low complexity over residues 35-46 (SNSNSNASSPHQ) and 56-77 (SSNN…QQQQ). The span at 89–99 (PSPSNNDQNSR) shows a compositional bias: polar residues. Basic and acidic residues predominate over residues 174–193 (EPEKEHDLMSNSSEDMKYMA).

This sequence belongs to the hunchback C2H2-type zinc-finger protein family.

It localises to the nucleus. Functionally, gap class segmentation protein that controls development of head structures. In Drosophila iki (Fruit fly), this protein is Protein hunchback (hb).